The chain runs to 399 residues: Acetate kinase (399 aa).

Asparagine 9 is a Mg(2+) binding site. Position 16 (lysine 16) interacts with ATP. A substrate-binding site is contributed by arginine 90. The active-site Proton donor/acceptor is the aspartate 147. ATP is bound by residues 207–211, 281–283, and 333–337; these read HLGNG, DFR, and GVGEN. Glutamate 387 contacts Mg(2+).

Belongs to the acetokinase family. As to quaternary structure, homodimer. Requires Mg(2+) as cofactor. Mn(2+) is required as a cofactor.

It is found in the cytoplasm. It carries out the reaction acetate + ATP = acetyl phosphate + ADP. It participates in metabolic intermediate biosynthesis; acetyl-CoA biosynthesis; acetyl-CoA from acetate: step 1/2. Catalyzes the formation of acetyl phosphate from acetate and ATP. Can also catalyze the reverse reaction. This Mycobacterium sp. (strain JLS) protein is Acetate kinase.